The primary structure comprises 568 residues: Dihydroxy-acid dehydratase 1 (568 aa).

The interval 1 to 22 is disordered; the sequence is MAEQTNTPDLKPRSRDVTDGLE. A compositionally biased stretch (basic and acidic residues) spans 10–22; the sequence is LKPRSRDVTDGLE. Position 57 (cysteine 57) interacts with [2Fe-2S] cluster. Aspartate 89 lines the Mg(2+) pocket. Position 130 (cysteine 130) interacts with [2Fe-2S] cluster. Mg(2+) is bound by residues aspartate 131 and lysine 132. Residue lysine 132 is modified to N6-carboxylysine. Cysteine 207 serves as a coordination point for [2Fe-2S] cluster. A Mg(2+)-binding site is contributed by glutamate 458. The active-site Proton acceptor is serine 484.

Belongs to the IlvD/Edd family. In terms of assembly, homodimer. [2Fe-2S] cluster is required as a cofactor. Requires Mg(2+) as cofactor.

The enzyme catalyses (2R)-2,3-dihydroxy-3-methylbutanoate = 3-methyl-2-oxobutanoate + H2O. The catalysed reaction is (2R,3R)-2,3-dihydroxy-3-methylpentanoate = (S)-3-methyl-2-oxopentanoate + H2O. The protein operates within amino-acid biosynthesis; L-isoleucine biosynthesis; L-isoleucine from 2-oxobutanoate: step 3/4. Its pathway is amino-acid biosynthesis; L-valine biosynthesis; L-valine from pyruvate: step 3/4. Functions in the biosynthesis of branched-chain amino acids. Catalyzes the dehydration of (2R,3R)-2,3-dihydroxy-3-methylpentanoate (2,3-dihydroxy-3-methylvalerate) into 2-oxo-3-methylpentanoate (2-oxo-3-methylvalerate) and of (2R)-2,3-dihydroxy-3-methylbutanoate (2,3-dihydroxyisovalerate) into 2-oxo-3-methylbutanoate (2-oxoisovalerate), the penultimate precursor to L-isoleucine and L-valine, respectively. This is Dihydroxy-acid dehydratase 1 from Nocardia farcinica (strain IFM 10152).